Here is a 356-residue protein sequence, read N- to C-terminus: 3-isopropylmalate dehydrogenase (356 aa).

4 residues coordinate substrate: Arg95, Arg105, Arg133, and Asp223. Residues Asp223, Asp247, and Asp251 each coordinate Mg(2+). An NAD(+)-binding site is contributed by 281 to 293 (GSAPDIAGQNKAN).

Belongs to the isocitrate and isopropylmalate dehydrogenases family. LeuB type 1 subfamily. Homodimer. Requires Mg(2+) as cofactor. Mn(2+) is required as a cofactor.

It is found in the cytoplasm. It carries out the reaction (2R,3S)-3-isopropylmalate + NAD(+) = 4-methyl-2-oxopentanoate + CO2 + NADH. Its pathway is amino-acid biosynthesis; L-leucine biosynthesis; L-leucine from 3-methyl-2-oxobutanoate: step 3/4. Its function is as follows. Catalyzes the oxidation of 3-carboxy-2-hydroxy-4-methylpentanoate (3-isopropylmalate) to 3-carboxy-4-methyl-2-oxopentanoate. The product decarboxylates to 4-methyl-2 oxopentanoate. In Neisseria gonorrhoeae (strain ATCC 700825 / FA 1090), this protein is 3-isopropylmalate dehydrogenase.